The following is a 1881-amino-acid chain: Kinesin-like protein KIF26A (1881 aa).

Disordered regions lie at residues 20-66 (PARE…AGGG), 145-193 (PASH…PPGP), and 309-330 (ASKRKKHHPPPAPSTRGTSTYP). Ser30 is modified (phosphoserine). One can recognise a Kinesin motor domain in the interval 364–718 (KVKVMLRIWP…VQLAARIHRL (355 aa)). 462 to 469 (GHMSLGKS) contacts ATP. 8 disordered regions span residues 718 to 778 (LRRK…SSEQ), 794 to 827 (SDRELTDNEGPPDFVPIIPALSRRRPSEGPRDAD), 846 to 982 (GSEA…QAAL), 1078 to 1104 (YTSQMSEGPGDPGEFPEGTAWAGGSPA), 1118 to 1266 (LSES…PRLP), 1328 to 1425 (SGSL…PYRP), 1442 to 1633 (SKVR…SGEL), and 1652 to 1698 (YESM…TGLQ). Positions 742 to 751 (RRPPHLRPFH) are enriched in basic residues. Basic and acidic residues predominate over residues 818-827 (RPSEGPRDAD). Residues 905–915 (SDPSKTGTQSE) are compositionally biased toward polar residues. Residues 940–950 (LPSPAPPPPRQ) are compositionally biased toward pro residues. Residues 1084–1095 (EGPGDPGEFPEG) show a composition bias toward low complexity. Positions 1151 to 1162 (EESKVRSSECGR) are enriched in basic and acidic residues. At Ser1257 the chain carries Phosphoserine. Residues 1328 to 1353 (SGSLKTTSGSKKSVSPKGAFFPRPSG) show a composition bias toward low complexity. Residues 1366–1378 (LEQSTALTPTQAL) show a composition bias toward polar residues. Residues 1390-1399 (RGEEEARPSG) are compositionally biased toward basic and acidic residues. Over residues 1400–1412 (RSDSSVPKATSSL) the composition is skewed to polar residues. Composition is skewed to low complexity over residues 1477-1489 (PAKGVGATKPPAG), 1524-1537 (PGPRAAPRAVPGIG), and 1575-1587 (WGSTDSDSGNDSG). Positions 1616 to 1629 (RYSSGHGSDNSSVL) are enriched in polar residues. Ser1654 carries the phosphoserine modification. Residues 1664–1675 (SASSAPDSMSES) show a composition bias toward low complexity. Residues 1685–1698 (RSLKSPKKRATGLQ) are compositionally biased toward basic residues. The stretch at 1780–1812 (LRLAERRQQRLQEVQAKRDHLCEELAETQGRLM) forms a coiled coil.

Belongs to the TRAFAC class myosin-kinesin ATPase superfamily. Kinesin family. KIF26 subfamily. As to quaternary structure, interacts with GRB2 (via SH2 domain). As to expression, expressed in several neuronal populations.

The protein localises to the cytoplasm. It localises to the cytoskeleton. Functionally, atypical kinesin that plays a key role in enteric neuron development. Acts by repressing a cell growth signaling pathway in the enteric nervous system development, possibly via its interaction with GRB2 that prevents GRB2-binding to SHC, thereby attenating the GDNF-Ret signaling. Binds to microtubules but lacks microtubule-based motility due to the absence of ATPase activity. Plays a critical role in cerebral cortical development. It probably acts as a microtubule stabilizer that regulates neurite growth and radial migration of cortical excitatory neurons. This Mus musculus (Mouse) protein is Kinesin-like protein KIF26A (Kif26a).